We begin with the raw amino-acid sequence, 802 residues long: Phenylalanine--tRNA ligase beta subunit (802 aa).

One can recognise a tRNA-binding domain in the interval 39-150 (AKALKPFTIA…ADAPIGAAYA (112 aa)). Residues 400–475 (GDDRVIDFPV…RIYGVDKVPM (76 aa)) form the B5 domain. 4 residues coordinate Mg(2+): D453, D459, E462, and E463. The FDX-ACB domain occupies 708–801 (SAFQPVSRDF…VTKKTGGTLR (94 aa)).

This sequence belongs to the phenylalanyl-tRNA synthetase beta subunit family. Type 1 subfamily. As to quaternary structure, tetramer of two alpha and two beta subunits. The cofactor is Mg(2+).

The protein localises to the cytoplasm. It catalyses the reaction tRNA(Phe) + L-phenylalanine + ATP = L-phenylalanyl-tRNA(Phe) + AMP + diphosphate + H(+). This Bradyrhizobium diazoefficiens (strain JCM 10833 / BCRC 13528 / IAM 13628 / NBRC 14792 / USDA 110) protein is Phenylalanine--tRNA ligase beta subunit.